A 1375-amino-acid polypeptide reads, in one-letter code: BNI1-related protein 1 (1375 aa).

In terms of domain architecture, GBD/FH3 spans 94–490; it reads CMPQDASLVE…YLIDSFQVST (397 aa). A coiled-coil region spans residues 520–601; it reads QSDEIARRAV…ITTHQRLYDQ (82 aa). A Phosphoserine modification is found at Ser-621. Residues 659–851 enclose the FH1 domain; the sequence is SSYLTDANNE…LVTPPAPPLP (193 aa). Residues 661-684 form a disordered region; it reads YLTDANNENESQNESEDKSKDSLF. Position 751 is a phosphoserine (Ser-751). Disordered stretches follow at residues 764-785, 817-839, and 1285-1309; these read KLPQ…QSLL, AVPP…GPSN, and KSLL…GEKV. 2 stretches are compositionally biased toward pro residues: residues 767–781 and 818–828; these read QLPP…PPLP and VPPPPPPPPLP. In terms of domain architecture, FH2 spans 868-1290; the sequence is DLKPPPTEKR…YEQRKSLLDM (423 aa). One can recognise a DAD domain in the interval 1302–1336; that stretch reads DENDGEKVNRDAVDLLISKLREVKKDPEPLRRRKS.

This sequence belongs to the formin homology family. BNI1 subfamily. As to quaternary structure, interacts with profilin at the FH1 domain.

May organize microtubules by mediating spindle positioning and movement in the budding process. Potential target of the RHO family members. This is BNI1-related protein 1 (BNR1) from Saccharomyces cerevisiae (strain ATCC 204508 / S288c) (Baker's yeast).